Here is a 222-residue protein sequence, read N- to C-terminus: Embryonic stem cell-related gene protein (222 aa).

As to expression, expressed only in fetal ovary and in undifferentiated ES cells.

The protein localises to the nucleus. This Homo sapiens (Human) protein is Embryonic stem cell-related gene protein (ESRG).